We begin with the raw amino-acid sequence, 874 residues long: Alanine--tRNA ligase (874 aa).

Zn(2+) is bound by residues H562, H566, C665, and H669.

The protein belongs to the class-II aminoacyl-tRNA synthetase family. The cofactor is Zn(2+).

Its subcellular location is the cytoplasm. It carries out the reaction tRNA(Ala) + L-alanine + ATP = L-alanyl-tRNA(Ala) + AMP + diphosphate. Its function is as follows. Catalyzes the attachment of alanine to tRNA(Ala) in a two-step reaction: alanine is first activated by ATP to form Ala-AMP and then transferred to the acceptor end of tRNA(Ala). Also edits incorrectly charged Ser-tRNA(Ala) and Gly-tRNA(Ala) via its editing domain. The chain is Alanine--tRNA ligase from Pseudomonas putida (strain W619).